The following is a 316-amino-acid chain: HPr kinase/phosphorylase (316 aa).

Catalysis depends on residues His-143 and Lys-164. 158–165 (GEAGSGKS) is an ATP binding site. Ser-165 lines the Mg(2+) pocket. Asp-182 acts as the Proton acceptor; for phosphorylation activity. Proton donor; for dephosphorylation activity in catalysis. The segment at 206-215 (LEVRGLGVLN) is important for the catalytic mechanism of both phosphorylation and dephosphorylation. Glu-207 lines the Mg(2+) pocket. Arg-251 is an active-site residue. Residues 272–277 (PVMPGR) form an important for the catalytic mechanism of dephosphorylation region.

Belongs to the HPrK/P family. As to quaternary structure, homohexamer. Requires Mg(2+) as cofactor.

It catalyses the reaction [HPr protein]-L-serine + ATP = [HPr protein]-O-phospho-L-serine + ADP + H(+). It carries out the reaction [HPr protein]-O-phospho-L-serine + phosphate + H(+) = [HPr protein]-L-serine + diphosphate. Functionally, catalyzes the ATP- as well as the pyrophosphate-dependent phosphorylation of a specific serine residue in HPr, a phosphocarrier protein of the phosphoenolpyruvate-dependent sugar phosphotransferase system (PTS). HprK/P also catalyzes the pyrophosphate-producing, inorganic phosphate-dependent dephosphorylation (phosphorolysis) of seryl-phosphorylated HPr (P-Ser-HPr). The protein is HPr kinase/phosphorylase of Xanthomonas axonopodis pv. citri (strain 306).